Reading from the N-terminus, the 193-residue chain is Gas vesicle protein C (193 aa).

Repeats lie at residues 19–51, 52–84, 85–117, 118–150, and 151–183; these read VAEL…LQAF, YKDL…LLAF, HKEL…LLAF, YQEV…LLAF, and HKEL…LLKF. The tract at residues 19–183 is 5 X 33 AA tandem repeats; that stretch reads VAELSLETRE…KEQKESLLKF (165 aa).

Belongs to the gas vesicle GvpC family.

The protein resides in the gas vesicle. Its function is as follows. Confers stability, involved in shaping gas vesicles (GV), hollow, gas-filled proteinaceous nanostructures. During planktonic growth they allow positioning of the organism at a favorable depth for light or nutrient acquisition. The ratio of GvpA:GvpC is estimated to be 25:1. GvpC strengthens the GV wall, probably by connecting several GvpA proteins in the same and/or adjacent ribs. Removal of GvpC by SDS reduces the critical collapse pressure (CCP) of stored gas vesicles from 0.23 Mpa to 0.08 MPa. Removal of GvpC by urea reduces CCP of freshly isolated GVs from 0.550 MPa to 0.190 MPa; addition of recombinant GvpC restores CCP to 0.508 MPa. As the turgor pressure in this species is usually 0.35 MPa (plus the water column pressure in its growth environment), this protein is essential for GV formation. In Dolichospermum flosaquae (Anabaena flos-aquae), this protein is Gas vesicle protein C.